Reading from the N-terminus, the 215-residue chain is Cytochrome c biogenesis ATP-binding export protein CcmA (215 aa).

Residues 8–215 (LQATALACER…RDLDLGQWSA (208 aa)) enclose the ABC transporter domain. 40–47 (GPNGCGKT) contacts ATP.

Belongs to the ABC transporter superfamily. CcmA exporter (TC 3.A.1.107) family. In terms of assembly, the complex is composed of two ATP-binding proteins (CcmA) and two transmembrane proteins (CcmB).

The protein localises to the cell inner membrane. The catalysed reaction is heme b(in) + ATP + H2O = heme b(out) + ADP + phosphate + H(+). Functionally, part of the ABC transporter complex CcmAB involved in the biogenesis of c-type cytochromes; once thought to export heme, this seems not to be the case, but its exact role is uncertain. Responsible for energy coupling to the transport system. The polypeptide is Cytochrome c biogenesis ATP-binding export protein CcmA (Pseudomonas syringae pv. syringae (strain B728a)).